Reading from the N-terminus, the 252-residue chain is Adenosylcobinamide-GDP ribazoletransferase (252 aa).

7 helical membrane-spanning segments follow: residues 4–24 (LFKG…PYVE), 38–58 (PIIG…INYL), 60–80 (ISIV…TGML), 113–133 (FSVI…HSFL), 141–161 (ILMF…ITII), 190–210 (LVCI…LLIV), and 232–252 (VAGF…CLFT).

It belongs to the CobS family. Mg(2+) is required as a cofactor.

It localises to the cell membrane. The enzyme catalyses alpha-ribazole + adenosylcob(III)inamide-GDP = adenosylcob(III)alamin + GMP + H(+). The catalysed reaction is alpha-ribazole 5'-phosphate + adenosylcob(III)inamide-GDP = adenosylcob(III)alamin 5'-phosphate + GMP + H(+). It functions in the pathway cofactor biosynthesis; adenosylcobalamin biosynthesis; adenosylcobalamin from cob(II)yrinate a,c-diamide: step 7/7. Its function is as follows. Joins adenosylcobinamide-GDP and alpha-ribazole to generate adenosylcobalamin (Ado-cobalamin). Also synthesizes adenosylcobalamin 5'-phosphate from adenosylcobinamide-GDP and alpha-ribazole 5'-phosphate. The polypeptide is Adenosylcobinamide-GDP ribazoletransferase (Clostridium botulinum (strain Eklund 17B / Type B)).